The sequence spans 296 residues: Thiamine-monophosphate kinase (296 aa).

D32, T46, and D48 together coordinate Mg(2+). D55 is a binding site for substrate. Residues D76 and D121 each coordinate Mg(2+). ATP is bound by residues 120–121 and R144; that span reads GD. Mg(2+) is bound at residue D206. S208 lines the ATP pocket. Position 209 (D209) interacts with Mg(2+). Substrate is bound at residue Y293.

The protein belongs to the thiamine-monophosphate kinase family.

It catalyses the reaction thiamine phosphate + ATP = thiamine diphosphate + ADP. It participates in cofactor biosynthesis; thiamine diphosphate biosynthesis; thiamine diphosphate from thiamine phosphate: step 1/1. Functionally, catalyzes the ATP-dependent phosphorylation of thiamine-monophosphate (TMP) to form thiamine-pyrophosphate (TPP), the active form of vitamin B1. This chain is Thiamine-monophosphate kinase, found in Archaeoglobus fulgidus (strain ATCC 49558 / DSM 4304 / JCM 9628 / NBRC 100126 / VC-16).